A 233-amino-acid chain; its full sequence is Chromosome partition protein MukE (233 aa).

The interval 207 to 233 (SLSLHDESDDADVTMGNAADSVEDEQE) is disordered.

It belongs to the MukE family. Interacts, and probably forms a ternary complex, with MukF and MukB. The complex formation is stimulated by calcium or magnesium.

It is found in the cytoplasm. It localises to the nucleoid. Involved in chromosome condensation, segregation and cell cycle progression. May participate in facilitating chromosome segregation by condensation DNA from both sides of a centrally located replisome during cell division. Probably acts via its interaction with MukB and MukF. This chain is Chromosome partition protein MukE, found in Yersinia pestis.